The sequence spans 886 residues: KH domain-containing protein hrpk-2 (886 aa).

Over residues aspartate 359–serine 368 the composition is skewed to basic and acidic residues. The disordered stretch occupies residues aspartate 359–aspartate 433. Basic residues-rich tracts occupy residues glycine 369–tyrosine 388 and histidine 415–histidine 425. KH domains lie at lysine 698–isoleucine 761 and proline 775–threonine 839.

This Caenorhabditis elegans protein is KH domain-containing protein hrpk-2.